Here is a 936-residue protein sequence, read N- to C-terminus: F-box protein dre-1 (936 aa).

Residues 1–67 form a disordered region; sequence MSSSSSPFFH…GSSEADNPTL (67 aa). The segment covering 22 to 36 has biased composition (low complexity); the sequence is QQSPSYSQNSNSPSQ. A compositionally biased stretch (polar residues) spans 48 to 63; the sequence is GSTSMRYSPSGSSEAD. The 47-residue stretch at 159-205 folds into the F-box domain; the sequence is QDHINRLPEELLLKVFSFLPDKSLLACSSVSYRFNQISNSHEVWKEL. PbH1 repeat units lie at residues 405–427, 428–450, 451–473, 474–496, 497–519, 520–542, 543–565, 566–588, 589–611, 612–634, 635–657, 658–680, 681–703, 704–726, 727–749, 750–772, 773–795, and 796–818; these read SAAP…YITD, NATG…WVKN, HANP…FTFE, HGQG…EVKN, SANP…YVHE, RGRG…WITS, HSDP…YIFG, EGRG…QIRS, QSDP…YVHE, KGRG…WVTT, GSSP…YFYD, QGHG…QIRT, GSNP…LVYN, GGKG…WIKT, DSEP…CIFN, RGKG…LIST, ESNP…EITN, and GATA…CVAT. Residues 843–914 form a UBR-type zinc finger; that stretch reads GLCLFKVSSN…LERHCHLQNV (72 aa).

Component of a SCF ubiquitin ligase complex. Interacts (via F-box) with skr-1. Interacts with blmp-1; the interaction targets blmp-1 for proteasomal degradation. Interacts with ced-9; the interaction inhibits ced-9 activity, either directly or indirectly. In mid-embryogenesis, expression is most prominent in epidermal and intestinal cells. By the 1.5-fold stage of embryogenesis, expression is additionally detected in neurons and other cells. During larval and adult stages, highest expression is seen in epidermal seam cells and hypodermis. In larvae, strongly expressed in the P epidermal blast cells and descendents that give rise to the vulva and weakly expressed in the somatic gonad, including the gonadoblasts, the anchor cell and the distal tip cells. Some weak expression also seen in adult spermatheca and uterus. In the musculature, expressed in the pharynx, anal depressor, sex muscles, and body wall muscles. Detected in neurons of the head, tail, ventral cord and periphery. Also expressed in the embryonic tail spike cell.

It is found in the nucleus. The protein localises to the cytoplasm. It participates in protein modification; protein ubiquitination. Its function is as follows. Substrate recognition component of a SCF (SKP1-CUL1-F-box protein) E3 ubiquitin-protein ligase complex which mediates the ubiquitination and subsequent proteasomal degradation of target proteins including blmp-1. Promotes ubiquitination of snail family proteins ces-1, scrt-1 and snai-1. Heterochronic protein which is required for the timing of gonad development and epidermal seam cell differentiation. Regulates tail-spike cell death through inhibition of the apoptosis regulator ced-9. This is F-box protein dre-1 from Caenorhabditis elegans.